A 196-amino-acid chain; its full sequence is Probable splicing factor, arginine/serine-rich 4 (196 aa).

Positions 19-97 (TSLKIDNLSY…RELRVTLAKY (79 aa)) constitute an RRM domain. Residues 91–106 (RVTLAKYDRPSDERGG) show a composition bias toward basic and acidic residues. Residues 91-196 (RVTLAKYDRP…SPSRSRSNSR (106 aa)) form a disordered region. The segment covering 112–141 (GRRRSRSPRRRSRSPRYSRSRSPRRSRSRT) has biased composition (basic residues). Composition is skewed to basic and acidic residues over residues 145–160 (PSRD…DNSR) and 167–176 (PPREDGSPKE). Residues 184–196 (ASRSPSRSRSNSR) are compositionally biased toward low complexity.

It belongs to the splicing factor SR family. Extensively phosphorylated on serine residues in the RS domain.

Its subcellular location is the nucleus. Its function is as follows. May play a functionally redundant role in embryogenesis. This Caenorhabditis elegans protein is Probable splicing factor, arginine/serine-rich 4 (rsp-4).